The primary structure comprises 89 residues: Small ribosomal subunit protein bS18 (89 aa).

The protein belongs to the bacterial ribosomal protein bS18 family. Part of the 30S ribosomal subunit. Forms a tight heterodimer with protein bS6.

Its function is as follows. Binds as a heterodimer with protein bS6 to the central domain of the 16S rRNA, where it helps stabilize the platform of the 30S subunit. The polypeptide is Small ribosomal subunit protein bS18 (Bdellovibrio bacteriovorus (strain ATCC 15356 / DSM 50701 / NCIMB 9529 / HD100)).